A 299-amino-acid chain; its full sequence is Ribosomal protein L11 methyltransferase (299 aa).

S-adenosyl-L-methionine is bound by residues threonine 150, glycine 171, aspartate 193, and asparagine 234.

Belongs to the methyltransferase superfamily. PrmA family.

The protein resides in the cytoplasm. The catalysed reaction is L-lysyl-[protein] + 3 S-adenosyl-L-methionine = N(6),N(6),N(6)-trimethyl-L-lysyl-[protein] + 3 S-adenosyl-L-homocysteine + 3 H(+). In terms of biological role, methylates ribosomal protein L11. The chain is Ribosomal protein L11 methyltransferase from Dictyoglomus turgidum (strain DSM 6724 / Z-1310).